The chain runs to 66 residues: U-scoloptoxin(04)-Ssd2a (66 aa).

The first 19 residues, 1 to 19 (MKAIYILSVLLLMMLPILS), serve as a signal peptide directing secretion.

It belongs to the scoloptoxin-04 family. Contains 2 disulfide bonds. Expressed by the venom gland.

The protein resides in the secreted. This Scolopendra dehaani (Thai centipede) protein is U-scoloptoxin(04)-Ssd2a.